Here is a 605-residue protein sequence, read N- to C-terminus: Isocitrate dehydrogenase kinase/phosphatase (605 aa).

ATP contacts are provided by residues 327 to 333 (APGIKGL) and Lys-348. Asp-383 is a catalytic residue.

This sequence belongs to the AceK family.

The protein localises to the cytoplasm. The enzyme catalyses L-seryl-[isocitrate dehydrogenase] + ATP = O-phospho-L-seryl-[isocitrate dehydrogenase] + ADP + H(+). Functionally, bifunctional enzyme which can phosphorylate or dephosphorylate isocitrate dehydrogenase (IDH) on a specific serine residue. This is a regulatory mechanism which enables bacteria to bypass the Krebs cycle via the glyoxylate shunt in response to the source of carbon. When bacteria are grown on glucose, IDH is fully active and unphosphorylated, but when grown on acetate or ethanol, the activity of IDH declines drastically concomitant with its phosphorylation. The polypeptide is Isocitrate dehydrogenase kinase/phosphatase (Burkholderia orbicola (strain AU 1054)).